Consider the following 223-residue polypeptide: NAD(P)H-hydrate epimerase (223 aa).

Positions 9–209 constitute a YjeF N-terminal domain; that stretch reads MQKIDTYTVN…DIGLLTPPDF (201 aa). A (6S)-NADPHX-binding site is contributed by 57-61; it reads NNGAD. K(+) contacts are provided by Asn58 and Asp119. Residues 123–129 and Asp152 contribute to the (6S)-NADPHX site; that span reads GTGLNNL. Residue Thr155 coordinates K(+).

It belongs to the NnrE/AIBP family. K(+) serves as cofactor.

The catalysed reaction is (6R)-NADHX = (6S)-NADHX. The enzyme catalyses (6R)-NADPHX = (6S)-NADPHX. Functionally, catalyzes the epimerization of the S- and R-forms of NAD(P)HX, a damaged form of NAD(P)H that is a result of enzymatic or heat-dependent hydration. This is a prerequisite for the S-specific NAD(P)H-hydrate dehydratase to allow the repair of both epimers of NAD(P)HX. The protein is NAD(P)H-hydrate epimerase of Leuconostoc gelidum subsp. gasicomitatum (strain DSM 15947 / CCUG 46042 / CECT 5767 / JCM 12535 / LMG 18811 / NBRC 113245 / TB1-10) (Leuconostoc gasicomitatum).